We begin with the raw amino-acid sequence, 55 residues long: Neurotoxin BmP08 (55 aa).

The signal sequence occupies residues 1–23; the sequence is MKIFFAVLVILVLFSMLIWTAYG. 3 disulfides stabilise this stretch: C30–C45, C36–C50, and C39–C53.

As to expression, expressed by the venom gland.

The protein localises to the secreted. The sequence is that of Neurotoxin BmP08 from Olivierus martensii (Manchurian scorpion).